The chain runs to 139 residues: Ribosome maturation factor RimP (139 aa).

The protein belongs to the RimP family.

It localises to the cytoplasm. Functionally, required for maturation of 30S ribosomal subunits. In Syntrophomonas wolfei subsp. wolfei (strain DSM 2245B / Goettingen), this protein is Ribosome maturation factor RimP.